Here is a 357-residue protein sequence, read N- to C-terminus: Holliday junction branch migration complex subunit RuvB (357 aa).

A disordered region spans residues 1-27; the sequence is MGRFDDAGAQDAEPDDRDVSPALTVGE. The interval 1-195 is large ATPase domain (RuvB-L); the sequence is MGRFDDAGAQ…FGFTAHMDFY (195 aa). Residues L34, R35, G76, K79, T80, S81, 142 to 144, R185, Y195, and R232 each bind ATP; that span reads EDF. Residue T80 coordinates Mg(2+). The interval 196 to 266 is small ATPAse domain (RuvB-S); the sequence is EPAELERVLA…IAKAALEVYD (71 aa). Positions 269–357 are head domain (RuvB-H); it reads ELGLDRLDRA…TGLGQTGLFD (89 aa). The DNA site is built by R324 and R329.

The protein belongs to the RuvB family. Homohexamer. Forms an RuvA(8)-RuvB(12)-Holliday junction (HJ) complex. HJ DNA is sandwiched between 2 RuvA tetramers; dsDNA enters through RuvA and exits via RuvB. An RuvB hexamer assembles on each DNA strand where it exits the tetramer. Each RuvB hexamer is contacted by two RuvA subunits (via domain III) on 2 adjacent RuvB subunits; this complex drives branch migration. In the full resolvosome a probable DNA-RuvA(4)-RuvB(12)-RuvC(2) complex forms which resolves the HJ.

The protein localises to the cytoplasm. The enzyme catalyses ATP + H2O = ADP + phosphate + H(+). Its function is as follows. The RuvA-RuvB-RuvC complex processes Holliday junction (HJ) DNA during genetic recombination and DNA repair, while the RuvA-RuvB complex plays an important role in the rescue of blocked DNA replication forks via replication fork reversal (RFR). RuvA specifically binds to HJ cruciform DNA, conferring on it an open structure. The RuvB hexamer acts as an ATP-dependent pump, pulling dsDNA into and through the RuvAB complex. RuvB forms 2 homohexamers on either side of HJ DNA bound by 1 or 2 RuvA tetramers; 4 subunits per hexamer contact DNA at a time. Coordinated motions by a converter formed by DNA-disengaged RuvB subunits stimulates ATP hydrolysis and nucleotide exchange. Immobilization of the converter enables RuvB to convert the ATP-contained energy into a lever motion, pulling 2 nucleotides of DNA out of the RuvA tetramer per ATP hydrolyzed, thus driving DNA branch migration. The RuvB motors rotate together with the DNA substrate, which together with the progressing nucleotide cycle form the mechanistic basis for DNA recombination by continuous HJ branch migration. Branch migration allows RuvC to scan DNA until it finds its consensus sequence, where it cleaves and resolves cruciform DNA. The polypeptide is Holliday junction branch migration complex subunit RuvB (Mycobacterium sp. (strain JLS)).